The chain runs to 193 residues: Iron-sulfur flavoprotein MJ1083 (193 aa).

Residues Cys47, Cys50, Cys53, and Cys59 each contribute to the [4Fe-4S] cluster site.

This sequence belongs to the SsuE family. Isf subfamily. Homodimer. It depends on FMN as a cofactor. [4Fe-4S] cluster serves as cofactor.

Redox-active protein probably involved in electron transport. This is Iron-sulfur flavoprotein MJ1083 from Methanocaldococcus jannaschii (strain ATCC 43067 / DSM 2661 / JAL-1 / JCM 10045 / NBRC 100440) (Methanococcus jannaschii).